The primary structure comprises 3032 residues: Biorientation of chromosomes in cell division protein 1-like 1 (3032 aa).

The span at 1-31 (MATNPQPQPPPPAPPPPPPQPQPPPPPPGPG) shows a compositional bias: pro residues. 4 disordered regions span residues 1-48 (MATN…GAGD), 164-195 (EEAA…SANV), 214-397 (NAAR…LDSD), and 409-465 (VHTS…RGVR). The segment covering 32-46 (AGPGASGPGSAGAGA) has biased composition (gly residues). The span at 234–243 (KLSSQPSTDV) shows a compositional bias: polar residues. Over residues 244–261 (STDKERGSEDATEREKAT) the composition is skewed to basic and acidic residues. A Phosphoserine modification is found at Ser264. Positions 310–391 (TDPKIKSMDK…RAAEGTKEDC (82 aa)) are enriched in basic and acidic residues. Residues 416–441 (SFEEDTEEEVVVSESMEEGEITSEDE) show a composition bias toward acidic residues. Lys471 is subject to N6-acetyllysine. Phosphoserine occurs at positions 480 and 482. 7 disordered regions span residues 480-1153 (SDSD…HKAT), 1165-1296 (MVDS…HNSN), 1309-1366 (GGRA…LSED), 1424-1491 (AAGE…SGRR), 1675-1701 (GSLS…TEGT), 1740-1858 (AKPQ…GHAS), and 1934-1978 (ALAG…ISTG). Composition is skewed to basic and acidic residues over residues 488-503 (VEQR…EERL) and 510-525 (REKL…EKTK). Residue Lys534 is modified to N6-acetyllysine. Basic and acidic residues-rich tracts occupy residues 547–568 (LEPK…EKKV) and 578–653 (SRNV…EYKR). Phosphoserine occurs at positions 632 and 656. Thr657 is modified (phosphothreonine). Composition is skewed to basic and acidic residues over residues 668 to 736 (TDTR…DKPS), 743 to 768 (GDSV…ESVR), and 799 to 846 (RDGK…KLQK). The span at 848–859 (ALSSKQHSVTSQ) shows a compositional bias: polar residues. Basic and acidic residues-rich tracts occupy residues 860 to 872 (KRSE…KCET), 934 to 960 (KPDK…RTSE), 978 to 1015 (AQKD…DGHR), and 1022 to 1069 (SNKD…ENRR). Ser1071 bears the Phosphoserine mark. Over residues 1086 to 1096 (MSGTTSSSSLQ) the composition is skewed to polar residues. At Ser1138 the chain carries Phosphoserine. Over residues 1272-1286 (STDSDLLSSSGSVTV) the composition is skewed to low complexity. Residues 1312–1329 (ASTSLANHSDVPNQYSTV) show a composition bias toward polar residues. 2 positions are modified to phosphoserine: Ser1315 and Ser1364. 2 stretches are compositionally biased toward basic and acidic residues: residues 1428 to 1470 (HVVD…RRDS) and 1479 to 1491 (GKME…SGRR). Residues Ser1676 and Ser1685 each carry the phosphoserine modification. Residues 1958–1970 (HHSDSQLTRKETV) are compositionally biased toward basic and acidic residues. Ser1989, Ser2001, Ser2092, and Ser2166 each carry phosphoserine. The disordered stretch occupies residues 2082–2101 (PMPSAVSGENSQLTASRSEE). A compositionally biased stretch (polar residues) spans 2088–2097 (SGENSQLTAS). 4 disordered regions span residues 2303 to 2322 (EENQ…LATK), 2370 to 2469 (EPSV…HCLT), 2536 to 2559 (EGGL…EKMG), and 2575 to 2596 (DVTL…PPKG). A phosphoserine mark is found at Ser2417 and Ser2443. Over residues 2449–2459 (CLREPEQKPAE) the composition is skewed to basic and acidic residues. A Phosphoserine modification is found at Ser2554. Ser2681 is modified (phosphoserine). The interval 2682–3032 (TEALSGCSVE…DENPLKKAKR (351 aa)) is disordered. Composition is skewed to acidic residues over residues 2692–2701 (ADPEEVEEEE) and 2715–2725 (SSEEELDDSPD). Positions 2727 to 2750 (LDSRIETAQRQYSETEPHDTKEEN) are enriched in basic and acidic residues. Polar residues predominate over residues 2758-2769 (SSVTSKTNSSTG). A compositionally biased stretch (basic and acidic residues) spans 2782-2804 (TGEKTEPNEDDGSIKSQEDDHPI). Positions 2805–2815 (IIKRRRGRPRK) are enriched in basic residues. The a.T hook DNA-binding region spans 2807–2819 (KRRRGRPRKYPAE). The span at 2822-2832 (FKSKEDSKTET) shows a compositional bias: basic and acidic residues. The segment covering 2833 to 2843 (DITTVEQSSPS) has biased composition (polar residues). Ser2840 and Ser2841 each carry phosphoserine. Basic and acidic residues predominate over residues 2853–2867 (ESNKEIANLEEKSTS). Ser2888 carries the post-translational modification Phosphoserine. Residue Thr2890 is modified to Phosphothreonine. Phosphoserine is present on residues Ser2892, Ser2898, and Ser2907. Glycyl lysine isopeptide (Lys-Gly) (interchain with G-Cter in ubiquitin) cross-links involve residues Lys2915 and Lys2916. Acidic residues predominate over residues 2919–2932 (ESDEEEEEEEEEEP). Ser2920 carries the post-translational modification Phosphoserine. Over residues 2975–2987 (LAKEKLSTSEKVS) the composition is skewed to basic and acidic residues. Ser3000 carries the phosphoserine modification. The segment covering 3020 to 3032 (QKVDENPLKKAKR) has biased composition (basic and acidic residues).

It belongs to the BOD1 family. Interacts (via COMPASS-Shg1 domain) with SETD1A at stalled replication forks; this interaction mediates FANCD2-dependent nucleosome remodeling at reversed forks protecting them from nucleolytic degradation.

It localises to the chromosome. Its function is as follows. Component of the fork protection machinery required to protect stalled/damaged replication forks from uncontrolled DNA2-dependent resection. Acts by stabilizing RAD51 at stalled replication forks and protecting RAD51 nucleofilaments from the antirecombinogenic activities of FBH1 and BLM. Does not regulate spindle orientation. This Mus musculus (Mouse) protein is Biorientation of chromosomes in cell division protein 1-like 1.